Reading from the N-terminus, the 449-residue chain is Plasmepsin IV (449 aa).

Topologically, residues 1-37 (MALTVKEEEFSNTLIKNASAFDRLKLGNLKNLKIQKK) are cytoplasmic. Positions 1-121 (MALTVKEEEF…SGYAQKGYLG (121 aa)) are excised as a propeptide. Residues 38–58 (LQFLYLILFVLITGVFFFFLI) traverse the membrane as a helical; Signal-anchor for type II membrane protein segment. The Lumenal segment spans residues 59–449 (GNFYSHRKLY…SVGFAVAKNL (391 aa)). Residues 137–444 (FYGEGQIGTN…DYEKESVGFA (308 aa)) form the Peptidase A1 domain. Residue aspartate 155 is part of the active site. Residues cysteine 168 and cysteine 173 are joined by a disulfide bond. Aspartate 335 is an active-site residue. Residues cysteine 370 and cysteine 406 are joined by a disulfide bond.

Belongs to the peptidase A1 family. In terms of assembly, component of the hemozoin formation complex (HFC) composed of falcipains FP2A and/or FP2B, plasmepsins PMII, PMIII/HAP and PMIV, heme detoxifying protein HDP and falcilysin FLN. The HFC complex is involved in hemoglobin degradation and detoxification of heme in the food vacuole during the asexual blood stage. Proteolytically cleaved into the soluble active mature form by cysteine proteases in the digestive vacuole of trophozoites. Proteolysis requires an acidic environment. Autoprocessing or transprocessing by other plasmepsins such as PMII may serve as an alternate activation system.

It is found in the membrane. The protein resides in the vacuole lumen. The catalysed reaction is Hydrolysis of the bonds linking certain hydrophobic residues in hemoglobin or globin. Also cleaves small molecules substrates such as Ala-Leu-Glu-Arg-Thr-Phe-|-Phe(NO2)-Ser-Phe-Pro-Thr.. Inhibited by pepstatin A. Functionally, during the asexual blood stage, catalyzes the cleavage of denatured host hemoglobin (Hb) or globins. Digestion of host Hb is an essential step which provides the parasite with amino acids for protein synthesis, and regulates osmolarity. In Plasmodium falciparum (isolate HB3), this protein is Plasmepsin IV.